The chain runs to 727 residues: Glycerol-3-phosphate dehydrogenase, mitochondrial (727 aa).

A mitochondrion-targeting transit peptide spans 1 to 42 (MAFQKAVKGTILVGGGALATVLGLSQFAHYRRKQMNLAYVKA). 71–99 (DILVIGGGATGSGCALDAVTRGLKTALVE) contacts FAD. Tyr601 carries the post-translational modification Phosphotyrosine. 2 consecutive EF-hand domains span residues 623 to 658 (SDIDRYKKRFHKFDADKKGFITIVDVQRVLESINVQ) and 659 to 694 (MDENTLHEILNEVDLNKNGQVELNEFLQLMSAIQKG). Ca(2+)-binding residues include Asp672, Asn674, Asn676, Gln678, and Glu683.

It belongs to the FAD-dependent glycerol-3-phosphate dehydrogenase family. FAD serves as cofactor.

It localises to the mitochondrion. The catalysed reaction is a quinone + sn-glycerol 3-phosphate = dihydroxyacetone phosphate + a quinol. It functions in the pathway polyol metabolism; glycerol degradation via glycerol kinase pathway; glycerone phosphate from sn-glycerol 3-phosphate (aerobic route): step 1/1. Calcium-binding enhance the activity of the enzyme. Calcium-responsive mitochondrial glycerol-3-phosphate dehydrogenase which seems to be a key component of the pancreatic beta-cell glucose-sensing device. The sequence is that of Glycerol-3-phosphate dehydrogenase, mitochondrial (GPD2) from Macaca fascicularis (Crab-eating macaque).